The sequence spans 209 residues: GTP cyclohydrolase-2 (209 aa).

49–53 (RIHSE) provides a ligand contact to GTP. Positions 54, 65, and 67 each coordinate Zn(2+). GTP is bound by residues Gln-70, 92-94 (EGR), and Thr-114. Asp-126 acts as the Proton acceptor in catalysis. The active-site Nucleophile is Arg-128. GTP contacts are provided by Thr-149 and Lys-154.

It belongs to the GTP cyclohydrolase II family. Zn(2+) is required as a cofactor.

It carries out the reaction GTP + 4 H2O = 2,5-diamino-6-hydroxy-4-(5-phosphoribosylamino)-pyrimidine + formate + 2 phosphate + 3 H(+). It functions in the pathway cofactor biosynthesis; riboflavin biosynthesis; 5-amino-6-(D-ribitylamino)uracil from GTP: step 1/4. Catalyzes the conversion of GTP to 2,5-diamino-6-ribosylamino-4(3H)-pyrimidinone 5'-phosphate (DARP), formate and pyrophosphate. The sequence is that of GTP cyclohydrolase-2 from Shewanella halifaxensis (strain HAW-EB4).